The following is a 734-amino-acid chain: Rho GTPase-activating protein gacL (734 aa).

One can recognise a Rho-GAP domain in the interval 141–339; the sequence is ISLDTLIAKE…QMILHYDTLF (199 aa). 3 WD repeats span residues 381-430, 539-579, and 585-623; these read GHNK…FIKE, LFMK…TIHQ, and KRPKRMACIEIDDTEYIWIGGDEGSIQIFNSKTFKLEHK.

It localises to the cytoplasm. Its function is as follows. Rho GTPase-activating protein involved in the signal transduction pathway. This Dictyostelium discoideum (Social amoeba) protein is Rho GTPase-activating protein gacL (gacL).